A 527-amino-acid polypeptide reads, in one-letter code: Sensory neuron membrane protein 1 (527 aa).

Over 1 to 10 (MQLQKPLKIG) the chain is Cytoplasmic. A helical membrane pass occupies residues 11-31 (LGMMGAGLFGIIFGWVLFPVI). The Extracellular portion of the chain corresponds to 32–456 (LKSQLKKEMA…LKNQLFIPKR (425 aa)). 2 N-linked (GlcNAc...) asparagine glycosylation sites follow: asparagine 67 and asparagine 229. Cystine bridges form between cysteine 268/cysteine 333, cysteine 297/cysteine 352, and cysteine 335/cysteine 341. Asparagine 440 carries an N-linked (GlcNAc...) asparagine glycan. The helical transmembrane segment at 457–477 (IVSVVKWLLAGVGFVGLVGSL) threads the bilayer. The Cytoplasmic portion of the chain corresponds to 478–527 (VYQFKGKMINFALSPSSAQVTKVNPEINQQNQPKDISIIGESQNPPKVDM).

Belongs to the CD36 family. As to expression, detected in both male and female antennal tissues. Expression is two to three fold higher in male compared to female antenna.

It is found in the cell membrane. In terms of biological role, plays an olfactory role that is not restricted to pheromone sensitivity. The chain is Sensory neuron membrane protein 1 from Ostrinia furnacalis (Asian corn borer).